The chain runs to 156 residues: ATP synthase subunit b (156 aa).

Residues 7 to 29 form a helical membrane-spanning segment; that stretch reads LFAQMVVFLVLAWFTMKFVWPPL.

The protein belongs to the ATPase B chain family. F-type ATPases have 2 components, F(1) - the catalytic core - and F(0) - the membrane proton channel. F(1) has five subunits: alpha(3), beta(3), gamma(1), delta(1), epsilon(1). F(0) has three main subunits: a(1), b(2) and c(10-14). The alpha and beta chains form an alternating ring which encloses part of the gamma chain. F(1) is attached to F(0) by a central stalk formed by the gamma and epsilon chains, while a peripheral stalk is formed by the delta and b chains.

The protein localises to the cell inner membrane. Its function is as follows. F(1)F(0) ATP synthase produces ATP from ADP in the presence of a proton or sodium gradient. F-type ATPases consist of two structural domains, F(1) containing the extramembraneous catalytic core and F(0) containing the membrane proton channel, linked together by a central stalk and a peripheral stalk. During catalysis, ATP synthesis in the catalytic domain of F(1) is coupled via a rotary mechanism of the central stalk subunits to proton translocation. Functionally, component of the F(0) channel, it forms part of the peripheral stalk, linking F(1) to F(0). The chain is ATP synthase subunit b from Burkholderia multivorans (strain ATCC 17616 / 249).